The sequence spans 620 residues: 1-deoxy-D-xylulose-5-phosphate synthase (620 aa).

Residues histidine 75 and 116-118 (AHS) contribute to the thiamine diphosphate site. Aspartate 147 is a binding site for Mg(2+). Residues 148–149 (GA), asparagine 177, tyrosine 284, and glutamate 366 each bind thiamine diphosphate. Residue asparagine 177 coordinates Mg(2+).

The protein belongs to the transketolase family. DXPS subfamily. In terms of assembly, homodimer. Mg(2+) serves as cofactor. Thiamine diphosphate is required as a cofactor.

The enzyme catalyses D-glyceraldehyde 3-phosphate + pyruvate + H(+) = 1-deoxy-D-xylulose 5-phosphate + CO2. It participates in metabolic intermediate biosynthesis; 1-deoxy-D-xylulose 5-phosphate biosynthesis; 1-deoxy-D-xylulose 5-phosphate from D-glyceraldehyde 3-phosphate and pyruvate: step 1/1. Its function is as follows. Catalyzes the acyloin condensation reaction between C atoms 2 and 3 of pyruvate and glyceraldehyde 3-phosphate to yield 1-deoxy-D-xylulose-5-phosphate (DXP). This chain is 1-deoxy-D-xylulose-5-phosphate synthase, found in Bordetella pertussis (strain Tohama I / ATCC BAA-589 / NCTC 13251).